Consider the following 125-residue polypeptide: Small ribosomal subunit protein eS8 (125 aa).

The tract at residues 1–30 (MTIFQGRATRKPSGGKLRPNHSKRRYELGR) is disordered.

It belongs to the eukaryotic ribosomal protein eS8 family. In terms of assembly, part of the 30S ribosomal subunit.

The sequence is that of Small ribosomal subunit protein eS8 from Picrophilus torridus (strain ATCC 700027 / DSM 9790 / JCM 10055 / NBRC 100828 / KAW 2/3).